The following is a 397-amino-acid chain: Acid extracellular protease (397 aa).

An N-terminal signal peptide occupies residues 1-17 (MQFSLATLTTLLAFVAA). The region spanning 61–378 (YQVQISLGGQ…DLERDEVSIA (318 aa)) is the Peptidase A1 domain. Asp-77 is an active-site residue. The N-linked (GlcNAc...) asparagine glycan is linked to Asn-88. Cys-93 and Cys-100 are disulfide-bonded. Asp-264 is an active-site residue. Cysteines 303 and 343 form a disulfide. N-linked (GlcNAc...) asparagine glycosylation is found at Asn-310 and Asn-314.

The protein belongs to the peptidase A1 family.

The protein resides in the secreted. This is Acid extracellular protease (AXP1) from Yarrowia lipolytica (strain CLIB 122 / E 150) (Yeast).